Here is a 202-residue protein sequence, read N- to C-terminus: High mobility group protein B3 (202 aa).

2 DNA-binding regions (HMG box) span residues 9–79 (PKGK…KDYG) and 93–161 (PKRP…ADYK). Cys-23 and Cys-45 each carry cysteine sulfonic acid (-SO3H); alternate. Cys-23 and Cys-45 are oxidised to a cystine. A disordered region spans residues 71–98 (YDREMKDYGPAKGGKKKKDPNAPKRPPS). Position 104 is a cysteine sulfonic acid (-SO3H) (Cys-104). The segment at 161 to 202 (KSKGKFDGAKGAATKAARKKVEEEDEEEEEDEEEEDEDDDDE) is disordered. Positions 183–202 (EEDEEEEEDEEEEDEDDDDE) are enriched in acidic residues.

Belongs to the HMGB family. In terms of processing, reduction/oxidation of cysteine residues Cys-23, Cys-45 and Cys-104 and a possible intramolecular disulfide bond involving Cys-23 and Cys-45 give rise to different redox forms with specific functional activities in various cellular compartments: 1- fully reduced HMGB3 (HMGB3C23hC45hC104h), 2- disulfide HMGB3 (HMGB3C23-C45C104h) and 3- sulfonyl HMGB3 (HMGB3C23soC45soC104so).

Its subcellular location is the nucleus. The protein localises to the chromosome. It is found in the cytoplasm. Functionally, multifunctional protein with various roles in different cellular compartments. May act in a redox sensitive manner. Associates with chromatin and binds DNA with a preference for non-canonical DNA structures such as single-stranded DNA. Can bend DNA and enhance DNA flexibility by looping thus providing a mechanism to promote activities on various gene promoters. Binds to the delta-1 crystallin/ASL1 enhancer. Proposed to be involved in the innate immune response to nucleic acids by acting as a cytoplasmic promiscuous immunogenic DNA/RNA sensor. In Gallus gallus (Chicken), this protein is High mobility group protein B3 (HMGB3).